Here is a 366-residue protein sequence, read N- to C-terminus: Pyruvate dehydrogenase E1 component subunit beta, mitochondrial (366 aa).

The N-terminal 33 residues, 1-33 (MFSRLPTSLARNVARRAPTSFVRPSAAAAALRF), are a transit peptide targeting the mitochondrion. E95 serves as a coordination point for thiamine diphosphate. Residues A196, I197, D199, and N201 each coordinate K(+).

Pyruvate dehydrogenase (E1) is a tetramer of 2 alpha and 2 beta subunits. Eukaryotic pyruvate dehydrogenase (PDH) complexes are organized as a core consisting of the oligomeric dihydrolipoamide acetyl-transferase (E2), around which are arranged multiple copies of pyruvate dehydrogenase (E1), dihydrolipoamide dehydrogenase (E3) and protein X (E3BP) bound by non-covalent bonds. It depends on thiamine diphosphate as a cofactor.

It localises to the mitochondrion matrix. It catalyses the reaction N(6)-[(R)-lipoyl]-L-lysyl-[protein] + pyruvate + H(+) = N(6)-[(R)-S(8)-acetyldihydrolipoyl]-L-lysyl-[protein] + CO2. The pyruvate dehydrogenase complex catalyzes the overall conversion of pyruvate to acetyl-CoA and CO(2). This Saccharomyces cerevisiae (strain ATCC 204508 / S288c) (Baker's yeast) protein is Pyruvate dehydrogenase E1 component subunit beta, mitochondrial (PDB1).